The primary structure comprises 307 residues: Taste receptor type 2 member 10 (307 aa).

The Extracellular segment spans residues 1 to 6 (MLRVVE). Residues 7-27 (GIFIFVVISESVFGVLGNGFI) form a helical membrane-spanning segment. Topologically, residues 28–42 (GLVNCIDCAKNKLST) are cytoplasmic. Residues 43 to 63 (IGFILTGLAISRIFLIWIIIT) traverse the membrane as a helical segment. The Extracellular segment spans residues 64–100 (DGFIQIFSPNIYASSNLIEYISYFWVIGNQSSMWFAT). Residues 101–121 (SLSIFYFLKIANFSNYIFLWL) form a helical membrane-spanning segment. Residues 122-126 (KSRTN) lie on the Cytoplasmic side of the membrane. The helical transmembrane segment at 127 to 147 (MVLPFMIVFLLISSLLNFAYI) threads the bilayer. The Extracellular portion of the chain corresponds to 148–179 (AKILNDYKMKNDTVWDLNMYKSEYFIKQILLN). Asn158 carries an N-linked (GlcNAc...) asparagine glycan. Residues 180–200 (LGVIFFFTLSLITCVLLIISL) traverse the membrane as a helical segment. At 201–227 (WRHNRQMQSNVTGLRDSNTEAHVKAMK) the chain is on the cytoplasmic side. The helical transmembrane segment at 228–248 (VLISFIILFILYFIGMAIEIS) threads the bilayer. At 249–257 (YFTVRENKL) the chain is on the extracellular side. Residues 258–278 (LLMFGMTTTAIYPWGHSFILI) traverse the membrane as a helical segment. Residues 279-307 (LGNSKLKQASLRVLQQLKCCEKRKNLRVT) lie on the Cytoplasmic side of the membrane.

The protein belongs to the G-protein coupled receptor T2R family.

The protein localises to the membrane. Functionally, receptor that may play a role in the perception of bitterness and is gustducin-linked. May play a role in sensing the chemical composition of the gastrointestinal content. The activity of this receptor may stimulate alpha gustducin, mediate PLC-beta-2 activation and lead to the gating of TRPM5. The protein is Taste receptor type 2 member 10 (TAS2R10) of Pan paniscus (Pygmy chimpanzee).